The sequence spans 354 residues: Methylthioribose-1-phosphate isomerase (354 aa).

Residues 58–60 (RGA), arginine 101, and glutamine 204 each bind substrate. Aspartate 245 serves as the catalytic Proton donor. Substrate is bound at residue 255–256 (NK).

This sequence belongs to the eIF-2B alpha/beta/delta subunits family. MtnA subfamily.

It carries out the reaction 5-(methylsulfanyl)-alpha-D-ribose 1-phosphate = 5-(methylsulfanyl)-D-ribulose 1-phosphate. Its pathway is amino-acid biosynthesis; L-methionine biosynthesis via salvage pathway; L-methionine from S-methyl-5-thio-alpha-D-ribose 1-phosphate: step 1/6. Its function is as follows. Catalyzes the interconversion of methylthioribose-1-phosphate (MTR-1-P) into methylthioribulose-1-phosphate (MTRu-1-P). In Xanthomonas campestris pv. campestris (strain ATCC 33913 / DSM 3586 / NCPPB 528 / LMG 568 / P 25), this protein is Methylthioribose-1-phosphate isomerase.